The following is a 252-amino-acid chain: 3-dehydroquinate dehydratase (252 aa).

Residues serine 21, 46–48 (EWR), and arginine 82 each bind 3-dehydroquinate. The active-site Proton donor/acceptor is histidine 143. Catalysis depends on lysine 170, which acts as the Schiff-base intermediate with substrate. Positions 213, 232, and 236 each coordinate 3-dehydroquinate.

This sequence belongs to the type-I 3-dehydroquinase family. As to quaternary structure, homodimer.

The catalysed reaction is 3-dehydroquinate = 3-dehydroshikimate + H2O. The protein operates within metabolic intermediate biosynthesis; chorismate biosynthesis; chorismate from D-erythrose 4-phosphate and phosphoenolpyruvate: step 3/7. Functionally, involved in the third step of the chorismate pathway, which leads to the biosynthesis of aromatic amino acids. Catalyzes the cis-dehydration of 3-dehydroquinate (DHQ) and introduces the first double bond of the aromatic ring to yield 3-dehydroshikimate. In Escherichia coli O6:K15:H31 (strain 536 / UPEC), this protein is 3-dehydroquinate dehydratase.